Reading from the N-terminus, the 147-residue chain is Large ribosomal subunit protein uL16 (147 aa).

The protein belongs to the universal ribosomal protein uL16 family. In terms of assembly, part of the 50S ribosomal subunit.

Its function is as follows. Binds 23S rRNA and is also seen to make contacts with the A and possibly P site tRNAs. This is Large ribosomal subunit protein uL16 from Clostridium tetani (strain Massachusetts / E88).